The following is a 623-amino-acid chain: V-type proton ATPase catalytic subunit A (623 aa).

Position 252–259 (252–259 (GAFGCGKT)) interacts with ATP.

The protein belongs to the ATPase alpha/beta chains family. V-ATPase is a heteromultimeric enzyme composed of a peripheral catalytic V1 complex (main components: subunits A, B, C, D, E, and F) attached to an integral membrane V0 proton pore complex (main component: the proteolipid protein).

It catalyses the reaction ATP + H2O + 4 H(+)(in) = ADP + phosphate + 5 H(+)(out). Catalytic subunit of the peripheral V1 complex of vacuolar ATPase. V-ATPase vacuolar ATPase is responsible for acidifying a variety of intracellular compartments in eukaryotic cells. This chain is V-type proton ATPase catalytic subunit A (CVA69.24), found in Gossypium hirsutum (Upland cotton).